We begin with the raw amino-acid sequence, 160 residues long: MNKEKELRAASPSLRHVQDLSSRVWILQNNILTAVPRKEQTVPVTITLLPCQYLDTLETNRGDPTYMGVQRPMSCLFCTKDGEQPVLQLGEGNIMEMYNKKEPVKASLFYHKKSGTTSTFESAAFPGWFIAVCSKGSCPLILTQELGEIFITDFEMIVVH.

A propeptide spanning residues Met1–Leu7 is cleaved from the precursor. Tyr98 bears the 3'-nitrotyrosine mark.

Belongs to the IL-1 family. Interacts with TMED10; the interaction mediates the translocation from the cytoplasm into the ERGIC (endoplasmic reticulum-Golgi intermediate compartment) and thereby secretion. In terms of processing, N-terminal truncation leads to a dramatic enhancement of its activity (&gt;1000-fold). In terms of tissue distribution, highly expressed in embryonic tissue and in tissues containing epithelial cells. Elevated expression levels are detected in chronic kidney disease; expressed inepithelia from the distal convoluted tubules (DCTs) to the cortical collecting ducts (CCDs) in single nephrons (at protein level).

The protein resides in the cytoplasm. Its subcellular location is the secreted. Functionally, cytokine that binds to and signals through the IL1RL2/IL-36R receptor which in turn activates NF-kappa-B and MAPK signaling pathways in target cells linked to a pro-inflammatory response. Part of the IL-36 signaling system that is thought to be present in epithelial barriers and to take part in local inflammatory response; similar to the IL-1 system with which it shares the coreceptor IL1RAP. Seems to be involved in skin inflammatory response by acting on keratinocytes, dendritic cells and indirectly on T-cells to drive tissue infiltration, cell maturation and cell proliferation. Induces the production of pro-inflammatory cytokines, including IL-12, Il-1 beta, IL-6, TNF-alpha and IL-23 in bone marrow-derived dendritic cells (BMDCs). Involved in dendritic cell maturation by stimulating the surface expression of CD80, CD86 and MHC class II. Induces the production of IFN-gamma, IL-4 and IL-17 by cultured CD4(+) T-cells and splenocytes. May play a role in pro-inflammatory effects in the lung: induces the expression of CXCL1 and CXCL2 in the lung, and the expression of TNF-alpha, IL-36c, IL-1A, IL-1B, CXCL1 and CXCL2 in isolated splenic CD11c(+) alveolar macrophages. May be involved in T-cell maturation by stimulating the surface expression of CD40 and modestly CD80 and CD86 in splenic CD11c(+) cells. May be involved in CD4(+) T-cell proliferation. Induces NF-kappa B activation in macrophages. The polypeptide is Interleukin-36 alpha (Mus musculus (Mouse)).